Reading from the N-terminus, the 479-residue chain is Baeyer-Villiger monooxygenase AacuH (479 aa).

The disordered stretch occupies residues 14–34; it reads DSLGHPDGASRPPVSAESLSR.

This sequence belongs to the AflY oxidoreductase family.

The protein operates within secondary metabolite biosynthesis. Functionally, baeyer-Villiger monooxygenase; part of the gene cluster that mediates the biosynthesis of the tetrahydroxanthone dimer secalonic acid D. The pathway begins with the synthesis of atrochrysone thioester by the polyketide synthase AacuL. The atrochrysone carboxyl ACP thioesterase AacuM then breaks the thioester bond and releases the atrochrysone carboxylic acid from AacuL. Atrochrysone carboxylic acid is decarboxylated by the decarboxylase AacuI, and oxidized by the anthrone oxygenase AacuG to yield emodin. Emodin is then reduced to emodin hydroquinone by a yet unidentified oxidoreductase. A-ring reduction by the short chain dehydrogenase AacuN, dehydration by the scytalone dehydratase-like protein AacuK and probable spontaneous re-oxidation, results in overall deoxygenation to chrysophanol. Baeyer-Villiger oxidation by the Baeyer-Villiger monooxygenase (BVMO) AacuH then yields monodictyphenone. Monodictyphenone is transformed into compounds with the tetrahydroxanthone skeleton via methylesterification by the methyltransferase AacuQ, followed by the action of the flavin-dependent monooxygenase AacuC, the isomerase AacuP, and the short chain dehydrogenase/reductase AacuF or AacuD. AacuF and AacuD should accept the same compound as a substrate but perform the ketoreduction with a different stereoselectivity, thus yielding blennolides B and A, respectively. In the final step of the biosynthesis, the cytochrome P450 monooxygenase AacuE accepts blennolide B and/or blennolide A to conduct the dimerization reaction to furnish the tetrahydroxanthone dimers, secalonic acids D, B, and F. This Aspergillus aculeatus (strain ATCC 16872 / CBS 172.66 / WB 5094) protein is Baeyer-Villiger monooxygenase AacuH.